We begin with the raw amino-acid sequence, 157 residues long: DNA gyrase inhibitor (157 aa).

Belongs to the DNA gyrase inhibitor family. As to quaternary structure, interacts with DNA gyrase.

The protein resides in the cytoplasm. Inhibits the supercoiling activity of DNA gyrase. Acts by inhibiting DNA gyrase at an early step, prior to (or at the step of) binding of DNA by the gyrase. It protects cells against toxins that target DNA gyrase, by inhibiting activity of these toxins and reducing the formation of lethal double-strand breaks in the cell. This Shigella boydii serotype 18 (strain CDC 3083-94 / BS512) protein is DNA gyrase inhibitor.